The following is a 217-amino-acid chain: Somatotropin (217 aa).

An N-terminal signal peptide occupies residues 1–26; sequence MATGSRTSLLLAFTLLCLPQLKEAGA. Residue H44 coordinates Zn(2+). C79 and C191 form a disulfide bridge. At S132 the chain carries Phosphoserine. Residue E200 coordinates Zn(2+). C208 and C215 form a disulfide bridge.

It belongs to the somatotropin/prolactin family.

It localises to the secreted. In terms of biological role, plays an important role in growth control. Its major role in stimulating body growth is to stimulate the liver and other tissues to secrete IGF1. It stimulates both the differentiation and proliferation of myoblasts. It also stimulates amino acid uptake and protein synthesis in muscle and other tissues. This chain is Somatotropin (GH1), found in Saimiri boliviensis boliviensis (Bolivian squirrel monkey).